We begin with the raw amino-acid sequence, 100 residues long: Urease subunit gamma (100 aa).

The protein belongs to the urease gamma subunit family. Heterotrimer of UreA (gamma), UreB (beta) and UreC (alpha) subunits. Three heterotrimers associate to form the active enzyme.

It is found in the cytoplasm. It catalyses the reaction urea + 2 H2O + H(+) = hydrogencarbonate + 2 NH4(+). Its pathway is nitrogen metabolism; urea degradation; CO(2) and NH(3) from urea (urease route): step 1/1. The chain is Urease subunit gamma from Burkholderia multivorans (strain ATCC 17616 / 249).